The sequence spans 229 residues: MSASLDRLERKLGYTFKNQDQMLLALTHRSYAGRNNERLEFLGDAILNFVVGEALFERFPQAREGQLSRLRARLVKGETLARLARGFDLGDYLRLGSGELKSGGFRRESILADALEALIGAIYQDADMQTARERILAWLTDEFDGLTLVDTNKDPKTRLQEFLQSRACELPRYEVVDIQGEPHCRTFFVECEVVLLNKKSRGQGVSRRIAEQVAAAAALIALGVENGND.

The region spanning 5-127 is the RNase III domain; it reads LDRLERKLGY…LIGAIYQDAD (123 aa). E40 contributes to the Mg(2+) binding site. D44 is an active-site residue. Residues D113 and E116 each contribute to the Mg(2+) site. The active site involves E116. Residues 154 to 224 enclose the DRBM domain; that stretch reads DPKTRLQEFL…AAAALIALGV (71 aa).

It belongs to the ribonuclease III family. As to quaternary structure, homodimer. It depends on Mg(2+) as a cofactor.

The protein localises to the cytoplasm. The catalysed reaction is Endonucleolytic cleavage to 5'-phosphomonoester.. In terms of biological role, digests double-stranded RNA. Involved in the processing of primary rRNA transcript to yield the immediate precursors to the large and small rRNAs (23S and 16S). Processes some mRNAs, and tRNAs when they are encoded in the rRNA operon. Processes pre-crRNA and tracrRNA of type II CRISPR loci if present in the organism. The sequence is that of Ribonuclease 3 from Pseudomonas entomophila (strain L48).